Reading from the N-terminus, the 128-residue chain is Sulfurtransferase TusD (128 aa).

The active-site Cysteine persulfide intermediate is Cys78.

The protein belongs to the DsrE/TusD family. In terms of assembly, heterohexamer, formed by a dimer of trimers. The hexameric TusBCD complex contains 2 copies each of TusB, TusC and TusD. The TusBCD complex interacts with TusE.

The protein localises to the cytoplasm. Part of a sulfur-relay system required for 2-thiolation of 5-methylaminomethyl-2-thiouridine (mnm(5)s(2)U) at tRNA wobble positions. Accepts sulfur from TusA and transfers it in turn to TusE. The polypeptide is Sulfurtransferase TusD (Salmonella arizonae (strain ATCC BAA-731 / CDC346-86 / RSK2980)).